Here is a 190-residue protein sequence, read N- to C-terminus: Recombination protein RecR (190 aa).

A C4-type zinc finger spans residues 58-73; the sequence is CEQCGALSENELCEIC. The Toprim domain maps to 81 to 167; sequence NILCIVESPK…TFSKIAQGIP (87 aa).

It belongs to the RecR family.

In terms of biological role, may play a role in DNA repair. It seems to be involved in an RecBC-independent recombinational process of DNA repair. It may act with RecF and RecO. The chain is Recombination protein RecR from Campylobacter jejuni subsp. jejuni serotype O:23/36 (strain 81-176).